The sequence spans 971 residues: U2 snRNP component HSH155 (971 aa).

Disordered stretches follow at residues Met1–Gln22 and Thr54–Glu118. The span at Val8–Gln22 shows a compositional bias: polar residues. Residues Thr54 to Pro75 are compositionally biased toward basic and acidic residues. The span at Asp78–Asp90 shows a compositional bias: polar residues. HEAT repeat units lie at residues Met199–Lys237, Ala273–Val310, Asn350–Pro387, Leu513–Thr550, Pro596–Asn633, Pro680–Thr717, Lys722–Pro759, Cys792–Asn829, and Lys832–Gly870.

The protein belongs to the SF3B1 family. Belongs to the CWC complex (or CEF1-associated complex), a spliceosome sub-complex reminiscent of a late-stage spliceosome composed of the U2, U5 and U6 snRNAs and at least BUD13, BUD31, BRR2, CDC40, CEF1, CLF1, CUS1, CWC2, CWC15, CWC21, CWC22, CWC23, CWC24, CWC25, CWC27, ECM2, HSH155, IST3, ISY1, LEA1, MSL1, NTC20, PRP8, PRP9, PRP11, PRP19, PRP21, PRP22, PRP45, PRP46, SLU7, SMB1, SMD1, SMD2, SMD3, SMX2, SMX3, SNT309, SNU114, SPP2, SYF1, SYF2, RSE1 and YJU2. Interacts with RDS3.

It is found in the nucleus. In terms of biological role, contacts pre-mRNA on both sides of the branch site early in spliceosome assembly. This chain is U2 snRNP component HSH155 (HSH155), found in Saccharomyces cerevisiae (strain ATCC 204508 / S288c) (Baker's yeast).